Reading from the N-terminus, the 220-residue chain is Thioredoxin domain-containing protein (220 aa).

The N-terminal stretch at 1-19 (MKFLILNCLILFSLISSEA) is a signal peptide. A Thioredoxin domain is found at 20 to 141 (TNVKLDREDQ…SEFALGDFKN (122 aa)). Residues 20-181 (TNVKLDREDQ…YDAALAGFVT (162 aa)) are Lumenal-facing. A disulfide bridge links cysteine 64 with cysteine 67. The helical transmembrane segment at 182-202 (ISSFSFLFGLLVGLMLSLFLF) threads the bilayer. The Cytoplasmic segment spans residues 203–220 (TRRATRKPKVLTERKKDK). Residues 217-220 (KKDK) carry the Di-lysine motif motif.

This sequence belongs to the protein disulfide isomerase family.

Its subcellular location is the endoplasmic reticulum membrane. The polypeptide is Thioredoxin domain-containing protein (Theileria parva (East coast fever infection agent)).